The following is a 325-amino-acid chain: Putative metal ion transporter ZIPCO (325 aa).

3 helical membrane passes run 5–25 (TFLA…PAYI), 46–66 (IASG…VIIL), and 74–94 (LYYI…TDIL). Residues Asn-106 and Asn-160 are each glycosylated (N-linked (GlcNAc...) asparagine). Helical transmembrane passes span 179-199 (FFIV…MGSL), 239-259 (IYAW…IFSF), 264-284 (FVEI…SFNM), and 296-316 (HFIS…MILF).

It is found in the cytoplasmic vesicle membrane. In terms of biological role, putative transporter for the divalent zinc and iron cations. The sequence is that of Putative metal ion transporter ZIPCO from Plasmodium falciparum (isolate 3D7).